Here is a 331-residue protein sequence, read N- to C-terminus: Junctional sarcoplasmic reticulum protein 1 (331 aa).

Disordered stretches follow at residues Met-1–Pro-118 and Arg-157–Asp-331. A mediates interaction with CACNA1S region spans residues Met-3–Pro-76. 2 stretches are compositionally biased toward basic and acidic residues: residues Leu-21–Ala-35 and Thr-61–Ala-71. 2 stretches are compositionally biased toward pro residues: residues Pro-103 to Ala-112 and Pro-161 to Pro-175. Basic and acidic residues-rich tracts occupy residues Ala-222–Glu-242 and Pro-250–Lys-302. Positions Ser-320–Asp-331 are enriched in basic residues.

Interacts with CACNA1S, CACNB1 and calsequestrin.

It localises to the sarcoplasmic reticulum membrane. Its subcellular location is the endoplasmic reticulum membrane. Functionally, involved in skeletal muscle excitation/contraction coupling (EC), probably acting as a regulator of the voltage-sensitive calcium channel CACNA1S. EC is a physiological process whereby an electrical signal (depolarization of the plasma membrane) is converted into a chemical signal, a calcium gradient, by the opening of ryanodine receptor calcium release channels. May regulate CACNA1S membrane targeting and activity. This Homo sapiens (Human) protein is Junctional sarcoplasmic reticulum protein 1 (JSRP1).